Consider the following 563-residue polypeptide: Eukaryotic translation initiation factor 3 subunit D-1 (563 aa).

The tract at residues 98–167 is disordered; it reads VQKPPHQRGR…GPPPKMRESS (70 aa). A compositionally biased stretch (basic residues) spans 100-121; it reads KPPHQRGRFRNMRNSRSGRGRN. Residue threonine 128 is modified to Phosphothreonine. The RNA gate stretch occupies residues 291 to 305; that stretch reads EFDLLTVNETSVEPP.

It belongs to the eIF-3 subunit D family. As to quaternary structure, component of the eukaryotic translation initiation factor 3 (eIF-3) complex. The eIF-3 complex interacts with pix.

Its subcellular location is the cytoplasm. In terms of biological role, mRNA cap-binding component of the eukaryotic translation initiation factor 3 (eIF-3) complex, which is involved in protein synthesis of a specialized repertoire of mRNAs and, together with other initiation factors, stimulates binding of mRNA and methionyl-tRNAi to the 40S ribosome. The eIF-3 complex specifically targets and initiates translation of a subset of mRNAs involved in cell proliferation. In the eIF-3 complex, eif3d specifically recognizes and binds the 7-methylguanosine cap of a subset of mRNAs. This chain is Eukaryotic translation initiation factor 3 subunit D-1, found in Drosophila virilis (Fruit fly).